Here is a 506-residue protein sequence, read N- to C-terminus: Dipeptide and tripeptide permease A (506 aa).

Topologically, residues 1 to 36 (MSTANNNSEHPESVSLNAFKQPKAFYLIFSIELWER) are cytoplasmic. A helical transmembrane segment spans residues 37–57 (FGYYGLQGIMAVYLVKMLGLS). Residues 58–61 (EADS) lie on the Periplasmic side of the membrane. Residues 62–82 (ITLFSSFSALVYGFVAIGGWL) traverse the membrane as a helical segment. At 83 to 91 (GDKVLGSKR) the chain is on the cytoplasmic side. The next 2 helical transmembrane spans lie at 92–112 (VIVL…YSGH) and 113–133 (EIFW…LFKA). Residues 134-155 (NPSSLLSTCYEKDDPRLDGAFT) are Cytoplasmic-facing. The chain crosses the membrane as a helical span at residues 156–176 (MYYMSVNIGSFLSMLATPWLA). Residues 177 to 180 (AKYG) are Periplasmic-facing. Residues 181–201 (WSVAFSLSVVGMLITLVNFMV) form a helical membrane-spanning segment. Residues 202–222 (CHKWVKQHGSKPDFKPLQVKK) lie on the Cytoplasmic side of the membrane. A helical membrane pass occupies residues 223–243 (LLMVLVGVVALVALSSWLLHN). Residues 244 to 248 (QIIAR) are Periplasmic-facing. Residues 249 to 269 (WALAIVSIGIVIVFAKETFAL) traverse the membrane as a helical segment. The Cytoplasmic portion of the chain corresponds to 270 to 276 (HGAARRK). A helical membrane pass occupies residues 277–297 (MIVAFLLMLEAVVFFVLYSQM). Residues 298-322 (PTSLNFFAIHNVEHNILGLAFEPEQ) lie on the Periplasmic side of the membrane. Residues 323 to 343 (YQALNPFWIMLASPILAALYN) form a helical membrane-spanning segment. The Cytoplasmic segment spans residues 344–354 (KMGDRLPMPHK). A helical membrane pass occupies residues 355 to 375 (FAFGMILCSGAFLVLPWGASF). Residues 376-385 (ANEQGIVSVN) are Periplasmic-facing. Residues 386–406 (WLILSYALQSIGELMISGLGL) form a helical membrane-spanning segment. Residues 407 to 416 (AMVAQLVPQR) are Cytoplasmic-facing. The helical transmembrane segment at 417–437 (LMGFIMGSWFLTTAAAALIAG) threads the bilayer. The Periplasmic portion of the chain corresponds to 438 to 461 (KVAGLTAVPGDVNDAHASLAIYSH). Residues 462–482 (VFMQIGIATAVIAILMMLTAP) traverse the membrane as a helical segment. The Cytoplasmic segment spans residues 483 to 506 (KLHRMTLDTAEDTEKKAQAAAITN).

Belongs to the major facilitator superfamily. Proton-dependent oligopeptide transporter (POT/PTR) (TC 2.A.17) family. DtpA subfamily.

It localises to the cell inner membrane. In terms of biological role, proton-dependent permease that transports di- and tripeptides. This chain is Dipeptide and tripeptide permease A, found in Serratia proteamaculans (strain 568).